Consider the following 249-residue polypeptide: Sugar fermentation stimulation protein homolog (249 aa).

The protein belongs to the SfsA family.

The sequence is that of Sugar fermentation stimulation protein homolog from Synechococcus sp. (strain RCC307).